A 354-amino-acid polypeptide reads, in one-letter code: Glycerol-3-phosphate dehydrogenase [NAD(+)], glycosomal (354 aa).

NAD(+) contacts are provided by residues 15-20 (GSGAFG), phenylalanine 90, lysine 118, and alanine 150. A substrate-binding site is contributed by lysine 118. The active-site Proton acceptor is lysine 203. Residues arginine 267 and glutamate 293 each contribute to the NAD(+) site. 267 to 268 (RN) serves as a coordination point for substrate. The Microbody targeting signal motif lies at 352 to 354 (SKM).

The protein belongs to the NAD-dependent glycerol-3-phosphate dehydrogenase family.

The protein localises to the glycosome. It catalyses the reaction sn-glycerol 3-phosphate + NAD(+) = dihydroxyacetone phosphate + NADH + H(+). The polypeptide is Glycerol-3-phosphate dehydrogenase [NAD(+)], glycosomal (GPD) (Trypanosoma brucei rhodesiense).